Consider the following 68-residue polypeptide: Large ribosomal subunit protein bL35 (68 aa).

It belongs to the bacterial ribosomal protein bL35 family.

The polypeptide is Large ribosomal subunit protein bL35 (Pelagibacter ubique (strain HTCC1062)).